We begin with the raw amino-acid sequence, 493 residues long: MVSSVSLFASLTPYLVSALLLFLLLEQLFYRLKKRNLPGPLFVFPIIGNVVALIRDPTSFWDKQSAMADTSVGLSVNYLIGKFIIYIKDAELSNKVFSNIRPDAFQLVGHPFGKKLFGDHSLIFMFGENHKSVRRQVAPNFTRKPLSAYSSLQQIVILRHLRQWEESFSSGSRPVSMRQLIRELNLETSQTVFVGPYLDKEVKNTIRDDYNVFNPGTMALPIDLPGFTFGEARRAVSRLVNTMSLCVRKSKEKMAAGENPTCLVDFWTHSIVAESPPPPHSKDEEISCVLVDFLFASQDASTSSLLWAVVLLESEPEVLRRVREDVARFWSPESKESITADQLAEMKYIRAVAREVLRYRPPASMVPHVAVSDFRLTESYTIPKGTIVFPSLFDASFQGFTEPDRFDPDRFSETRQEDEVFKRNFLTFGIGSHQCVGQRYALNHLVLFIAMFSSMFDFKRVRSDGCDEIVHIPTMSPKDGCTVFLSSRLVTSP.

Residues 5 to 25 traverse the membrane as a helical segment; that stretch reads VSLFASLTPYLVSALLLFLLL. Cys435 serves as a coordination point for heme.

It belongs to the cytochrome P450 family. Requires heme as cofactor. Expressed in stems. Detected in primary root caps and immature petals.

Its subcellular location is the membrane. The catalysed reaction is 5-dehydroepisterol + NADPH + O2 + H(+) = ergosta-5,7,22,24(28)-tetraen-3beta-ol + NADP(+) + 2 H2O. Functionally, required to form the C-22 double bond in the sterol side chain. Possesses in vitro C-22 desaturase activity toward beta-sitosterol and produces stigmasterol. This chain is Cytochrome P450 710A3, found in Arabidopsis thaliana (Mouse-ear cress).